Reading from the N-terminus, the 201-residue chain is MKVYINVYDLMPDSPVNKLAWTLGLGIYHTGLVLEGKEYAFGAHEIPGSTGVFATMPRPPLEGCRWRCSIALPNCTLPKPDVDRILIRLSQEFTGLSYSLLERNCNHFTNAAAIELTGSPIPSFLNRISRIGLAFPTITNALLQHGQKNTSDVDDSSDSSSDVDEETLIVSKSKKAHKDIPKFSAPPPSADLNNLITDSLP.

A PPPDE domain is found at 1-143; the sequence is MKVYINVYDL…AFPTITNALL (143 aa). Catalysis depends on residues His29 and Cys105. Residues 146–201 form a disordered region; sequence GQKNTSDVDDSSDSSSDVDEETLIVSKSKKAHKDIPKFSAPPPSADLNNLITDSLP. A compositionally biased stretch (acidic residues) spans 152 to 167; sequence DVDDSSDSSSDVDEET. Over residues 191 to 201 the composition is skewed to polar residues; sequence DLNNLITDSLP.

It belongs to the DeSI family.

It is found in the cytoplasm. Its function is as follows. Has a role in meiosis. This is DeSI-like protein sdu1 (sdu1) from Schizosaccharomyces pombe (strain 972 / ATCC 24843) (Fission yeast).